Here is a 200-residue protein sequence, read N- to C-terminus: Recoverin (200 aa).

Residue G2 is the site of N-myristoyl glycine attachment. 4 EF-hand domains span residues 25–60, 61–96, 97–132, and 147–182; these read EEEL…FPDT, DPKA…TTAG, KTNQ…IFKM, and TPEK…NKEI. C39 is subject to Cysteine sulfenic acid (-SOH). Residues D74, N76, D78, T80, E85, D110, D112, N114, T116, and E121 each coordinate Ca(2+). The interval 189–192 is interaction with GRK1; the sequence is EPQK.

It belongs to the recoverin family. In terms of assembly, homodimer; disulfide-linked. Homodimerization is caused by prolonged intense illumination. May form a complex composed of RHO, GRK1 and RCVRN in a Ca(2+)-dependent manner; RCVRN prevents the interaction between GRK1 and RHO. Interacts (via C-terminus) with GRK1 (via N-terminus); the interaction is Ca(2+)-dependent. In terms of processing, the N-terminal glycine is linked to one of four different types of acyl groups. The most abundant is myristoleate (14:1), but 14:0, 14:2, and 12:0 acyl residues are also present. The Ca(2+) induced exposure of the myristoyl group, known as the calcium-myristoyl switch, promotes RCVRN binding to the photoreceptor cell membranes only when intracellular Ca(2+) concentration is high. Post-translationally, oxidation on Cys-39 occurs in response to prolonged intense illumination and results in the formation of disulfide homodimers, and to a lesser extent disulfide-linked heterodimers. Retina and pineal gland.

Its subcellular location is the photoreceptor inner segment. It is found in the cell projection. The protein localises to the cilium. The protein resides in the photoreceptor outer segment. It localises to the photoreceptor outer segment membrane. Its subcellular location is the perikaryon. Acts as a calcium sensor and regulates phototransduction of cone and rod photoreceptor cells. Modulates light sensitivity of cone photoreceptor in dark and dim conditions. In response to high Ca(2+) levels induced by low light levels, prolongs RHO/rhodopsin activation in rod photoreceptor cells by binding to and inhibiting GRK1-mediated phosphorylation of RHO/rhodopsin. Plays a role in scotopic vision/enhances vision in dim light by enhancing signal transfer between rod photoreceptors and rod bipolar cells. Improves rod photoreceptor sensitivity in dim light and mediates response of rod photoreceptors to facilitate detection of change and motion in bright light. The protein is Recoverin (RCVRN) of Homo sapiens (Human).